The sequence spans 49 residues: Large ribosomal subunit protein bL33 (49 aa).

Belongs to the bacterial ribosomal protein bL33 family.

The polypeptide is Large ribosomal subunit protein bL33 (rpmG) (Thermotoga maritima (strain ATCC 43589 / DSM 3109 / JCM 10099 / NBRC 100826 / MSB8)).